Consider the following 842-residue polypeptide: Xyloglucanase Xgh74A (842 aa).

Positions 1–32 (MVKKFTSKIKAAVFAAVVAATAIFGPAISSQA) are cleaved as a signal peptide. Residue aspartate 70 is the Nucleophile of the active site. BNR repeat units follow at residues 134-144 (RSTDRGETWEK), 185-196 (WRSTDYGVTWSK), 252-262 (YRSTDGGVTWK), and 358-368 (FRSTDGGATWK). The active-site Proton donor is the aspartate 480. BNR repeat units follow at residues 533 to 541 (FSYDGGRNW), 577 to 586 (VTTDNGNSWK), 616 to 626 (YISTDGGLTFT), 660 to 671 (WRSTDGGYTFEK), and 708 to 718 (FRSDDAGKTWV). The region spanning 771-841 (DKGLVGDLNG…LLQAIPELPK (71 aa)) is the Dockerin domain.

The protein belongs to the glycosyl hydrolase 74 family.

Functionally, hydrolyzes the glucosidic bonds of unbranched Glc residues in tamarind seed xyloglucan, producing XXXG, XLXG, XXLG and XLLG. Has low activity on carboxymethylcellulose, lichenan,hydroxyethylcellulose and glucuronoxylan, and no activity on xylan, polygalaturonic acid, wheat arabinoxylan, rhamnogalacturan, curdlan, laminarin, galactomannan, galactan, arabinan and pachyman or amorphous cellulose. This is Xyloglucanase Xgh74A from Acetivibrio thermocellus (strain ATCC 27405 / DSM 1237 / JCM 9322 / NBRC 103400 / NCIMB 10682 / NRRL B-4536 / VPI 7372) (Clostridium thermocellum).